Reading from the N-terminus, the 2082-residue chain is Autophagy-related protein 2 (2082 aa).

10 disordered regions span residues 108–130 (SADQ…LPNP), 144–175 (EEKE…EEFG), 285–343 (TAPP…VPEA), 365–435 (TEET…STFN), 462–527 (TGSF…RDGD), 580–636 (RSQC…SFES), 662–702 (SRDG…RSQD), 912–943 (SGVK…RQPS), 1435–1454 (DAAS…QPAN), and 2062–2082 (GAGN…YKRH). A compositionally biased stretch (basic and acidic residues) spans 111–126 (QDTHRSPTDDTGDDHV). Polar residues-rich tracts occupy residues 152 to 162 (AISSQSQVLQH) and 311 to 329 (PELN…QSTI). Composition is skewed to basic and acidic residues over residues 397–430 (IDSH…RLHD) and 489–500 (QHAEEPQHEVRA). The span at 503-522 (SGSQPAPPSEEGSSSSTSNS) shows a compositional bias: low complexity. 3 stretches are compositionally biased toward basic and acidic residues: residues 588–597 (NRTRDEKDET), 622–633 (RTAHSEATDKGS), and 690–702 (HSER…RSQD). Residues 2070-2082 (SNRRKMEDKYKRH) are compositionally biased toward basic and acidic residues.

Belongs to the ATG2 family.

It localises to the preautophagosomal structure membrane. The protein resides in the endoplasmic reticulum membrane. The catalysed reaction is a 1,2-diacyl-sn-glycero-3-phosphocholine(in) = a 1,2-diacyl-sn-glycero-3-phosphocholine(out). It carries out the reaction a 1,2-diacyl-sn-glycero-3-phospho-L-serine(in) = a 1,2-diacyl-sn-glycero-3-phospho-L-serine(out). The enzyme catalyses a 1,2-diacyl-sn-glycero-3-phosphoethanolamine(in) = a 1,2-diacyl-sn-glycero-3-phosphoethanolamine(out). Functionally, lipid transfer protein required for autophagosome completion and peroxisome degradation. Tethers the edge of the isolation membrane (IM) to the endoplasmic reticulum (ER) and mediates direct lipid transfer from ER to IM for IM expansion. Atg2 binds to the ER exit site (ERES), which is the membrane source for autophagosome formation, using basic residues in its N-terminal region (NR) and to the expanding edge of the IM through its C-terminal region. The latter binding is assisted by an atg18-PtdIns3P interaction. Atg2 then extracts phospholipids from the membrane source using its NR and transfers them to atg9 to the IM through its predicted beta-sheet-rich structure for membrane expansion. This chain is Autophagy-related protein 2 (atg2), found in Aspergillus terreus (strain NIH 2624 / FGSC A1156).